The primary structure comprises 1487 residues: Collagen alpha-1(II) chain (1487 aa).

A signal peptide spans 1-25 (MIRLGAPQTLVLLTLLVAAVLRCQG). A propeptide spans 26–181 (QDVQEAGSCV…PPGLGGNFAA (156 aa)) (N-terminal propeptide). A VWFC domain is found at 32 to 90 (GSCVQDGQRYNDKDVWKPEPCRICVCDTGTVLCDDIICEDVKDCLSPEIPFGECCPICP). The segment at 97–1237 (SGQPGPKGQK…PREKGPDPLQ (1141 aa)) is disordered. 2 stretches are compositionally biased toward basic and acidic residues: residues 105 to 116 (QKGEPGDIKDIV) and 133 to 154 (PRGD…RDGE). The span at 158–173 (PGNPGPPGPPGPPGPP) shows a compositional bias: pro residues. Residue lysine 190 is modified to 5-hydroxylysine. A glycan (O-linked (Gal...) hydroxylysine) is linked at lysine 190. The tract at residues 201–1214 (GPMGPMGPRG…PGPPGPPGPP (1014 aa)) is triple-helical region. A compositionally biased stretch (pro residues) spans 208 to 217 (PRGPPGPAGA). The segment covering 218–239 (PGPQGFQGNPGEPGEPGVSGPM) has biased composition (low complexity). Residues 241–250 (PRGPPGPPGK) show a composition bias toward pro residues. The span at 251–265 (PGDDGEAGKPGKAGE) shows a compositional bias: basic and acidic residues. 3 positions are modified to 5-hydroxylysine: lysine 287, lysine 299, and lysine 308. 3 O-linked (Gal...) hydroxylysine glycosylation sites follow: lysine 287, lysine 299, and lysine 308. Low complexity-rich tracts occupy residues 310–320 (ESGSPGENGSP) and 335–350 (TGPA…DGQP). The span at 360 to 369 (GPAGGPGFPG) shows a compositional bias: gly residues. Composition is skewed to low complexity over residues 370–382 (APGA…PTGA) and 391–431 (PRGE…AGAP). Lysine 374 carries the post-translational modification 5-hydroxylysine. Lysine 374 carries O-linked (Gal...) hydroxylysine glycosylation. The span at 433–442 (FPGPRGPPGP) shows a compositional bias: pro residues. 5-hydroxylysine occurs at positions 608 and 620. Lysine 608 and lysine 620 each carry an O-linked (Gal...) hydroxylysine glycan. Composition is skewed to low complexity over residues 622–631 (LPGAPGLRGL) and 656–667 (QGAPGPSGFQGL). 4-hydroxyproline occurs at positions 659 and 668. The residue at position 670 (proline 670) is a 3-hydroxyproline. Proline 671 and proline 674 each carry 4-hydroxyproline. Basic and acidic residues predominate over residues 764–775 (KGDRGDVGEKGP). 2 stretches are compositionally biased toward low complexity: residues 833–848 (AGFA…PGAK) and 877–913 (PTGV…SNGN). Residue proline 907 is modified to 3-hydroxyproline. 4-hydroxyproline occurs at positions 908, 914, and 920. Residues 1069-1079 (APGPPGSPGPA) are compositionally biased toward pro residues. Positions 1115 to 1129 (RGDKGEAGEPGERGL) are enriched in basic and acidic residues. Lysine 1130 carries the post-translational modification 5-hydroxylysine. The O-linked (Gal...) hydroxylysine glycan is linked to lysine 1130. The residue at position 1144 (proline 1144) is a 3-hydroxyproline. Over residues 1148–1157 (SGDQGASGPA) the composition is skewed to low complexity. Proline 1181 bears the 4-hydroxyproline mark. Proline 1186 is subject to 3-hydroxyproline. 4-hydroxyproline is present on proline 1187. The segment covering 1199-1216 (AGPPGNPGPPGPPGPPGP) has biased composition (pro residues). The residue at position 1201 (proline 1201) is a 3-hydroxyproline. 4-hydroxyproline is present on residues proline 1202 and proline 1205. 3-hydroxyproline is present on proline 1207. 4-hydroxyproline is present on residues proline 1208 and proline 1211. A 3-hydroxyproline modification is found at proline 1213. Proline 1214 is subject to 4-hydroxyproline. Positions 1215-1241 (GPGIDMSAFAGLGPREKGPDPLQYMRA) are nonhelical region (C-terminal). In terms of domain architecture, Fibrillar collagen NC1 spans 1253–1487 (AEVDATLKSL…GVDIGPVCFL (235 aa)). 3 disulfides stabilise this stretch: cysteine 1283-cysteine 1315, cysteine 1323-cysteine 1485, and cysteine 1393-cysteine 1438. The Ca(2+) site is built by aspartate 1301, asparagine 1303, glutamine 1304, cysteine 1306, and aspartate 1309. Residue asparagine 1388 is glycosylated (N-linked (GlcNAc...) asparagine).

Belongs to the fibrillar collagen family. As to quaternary structure, homotrimers of alpha 1(II) chains. Post-translationally, the N-telopeptide is covalently linked to the helical COL2 region of alpha 1(IX), alpha 2(IX) and alpha 3(IX) chain. The C-telopeptide is covalently linked to an another site in the helical region of alpha 3(IX) COL2. Contains mostly 4-hydroxyproline. Prolines at the third position of the tripeptide repeating unit (G-X-P) are 4-hydroxylated in some or all of the chains. In terms of processing, contains 3-hydroxyproline at a few sites. This modification occurs on the first proline residue in the sequence motif Gly-Pro-Hyp, where Hyp is 4-hydroxyproline. Post-translationally, lysine residues at the third position of the tripeptide repeating unit (G-X-Y) are 5-hydroxylated in some or all of the chains. O-glycosylated on hydroxylated lysine residues. The O-linked glycan consists of a Glc-Gal disaccharide. In terms of tissue distribution, isoform 2 is highly expressed in juvenile chondrocyte and low in fetal chondrocyte.

Its subcellular location is the secreted. The protein localises to the extracellular space. The protein resides in the extracellular matrix. Functionally, type II collagen is specific for cartilaginous tissues. It is essential for the normal embryonic development of the skeleton, for linear growth and for the ability of cartilage to resist compressive forces. The protein is Collagen alpha-1(II) chain of Homo sapiens (Human).